Consider the following 421-residue polypeptide: Imidazolonepropionase (421 aa).

Residues H81 and H83 each contribute to the Fe(3+) site. The Zn(2+) site is built by H81 and H83. 3 residues coordinate 4-imidazolone-5-propanoate: R90, Y153, and H186. Y153 lines the N-formimidoyl-L-glutamate pocket. Residue H251 coordinates Fe(3+). H251 provides a ligand contact to Zn(2+). E254 contributes to the 4-imidazolone-5-propanoate binding site. D326 lines the Fe(3+) pocket. D326 contacts Zn(2+). N328 and G330 together coordinate N-formimidoyl-L-glutamate. S331 contacts 4-imidazolone-5-propanoate.

It belongs to the metallo-dependent hydrolases superfamily. HutI family. It depends on Zn(2+) as a cofactor. Fe(3+) serves as cofactor.

It localises to the cytoplasm. The enzyme catalyses 4-imidazolone-5-propanoate + H2O = N-formimidoyl-L-glutamate. The protein operates within amino-acid degradation; L-histidine degradation into L-glutamate; N-formimidoyl-L-glutamate from L-histidine: step 3/3. Its function is as follows. Catalyzes the hydrolytic cleavage of the carbon-nitrogen bond in imidazolone-5-propanoate to yield N-formimidoyl-L-glutamate. It is the third step in the universal histidine degradation pathway. In Streptococcus pyogenes serotype M12 (strain MGAS2096), this protein is Imidazolonepropionase.